The following is a 479-amino-acid chain: Glutamate receptor U1 (479 aa).

The signal sequence occupies residues 1-17 (MEKSLLFLFAVTLLSVG). The Extracellular segment spans residues 18 to 163 (CTDAGESKGS…LFGFLTPFSK (146 aa)). Asn79 carries N-linked (GlcNAc...) asparagine glycosylation. The helical transmembrane segment at 164-184 (ETWIGILVAYMVTSLCLFLVG) threads the bilayer. Residues 185–229 (RLSPCEWTELSTEQNNFTFLNSLWFGAGAFTLQGAEPHPKSVSAR) are Cytoplasmic-facing. The helical transmembrane segment at 230–250 (IIAVIWWIFSIVLVAAYIASF) threads the bilayer. Residues 251 to 414 (AAFLNSDSVQ…AGWNPVQPHT (164 aa)) are Extracellular-facing. The N-linked (GlcNAc...) asparagine glycan is linked to Asn282. The chain crosses the membrane as a helical span at residues 415 to 435 (LGGIFLILGIGLALGVIAALI). Residues 436 to 479 (ELVLKARNNADQQKKSCCSAFSEEMGERLGTNKENQGAVDSVKS) lie on the Cytoplasmic side of the membrane.

The protein belongs to the glutamate-gated ion channel (TC 1.A.10.1) family. As to quaternary structure, homomeric.

It is found in the cell membrane. It localises to the postsynaptic cell membrane. In terms of biological role, receptor for glutamate. L-glutamate acts as an excitatory neurotransmitter at many synapses in the central nervous system. The postsynaptic actions of Glu are mediated by a variety of receptors that are named according to their selective agonists. This receptor binds domoate &gt; kainate &gt; AMPA &gt; NBQX &gt; glutamate. This chain is Glutamate receptor U1 (kbp), found in Xenopus laevis (African clawed frog).